The following is a 339-amino-acid chain: D-glycero-alpha-D-manno-heptose 7-phosphate kinase (339 aa).

17-20 provides a ligand contact to substrate; it reads GGTD. ATP-binding positions include Ser-57 and 110-116; that span reads GSGLGGS. Mg(2+) is bound by residues Ser-116 and Glu-148. The Proton acceptor role is filled by Asp-160.

The protein belongs to the GHMP kinase family.

The catalysed reaction is D-glycero-alpha-D-manno-heptose 7-phosphate + ATP = D-glycero-alpha-D-manno-heptose 1,7-bisphosphate + ADP + H(+). Its pathway is nucleotide-sugar biosynthesis; GDP-D-glycero-alpha-D-manno-heptose biosynthesis; GDP-D-glycero-alpha-D-manno-heptose from D-glycero-alpha-D-manno-heptose 7-phosphate: step 1/3. The protein operates within capsule biogenesis; capsule polysaccharide biosynthesis. Functionally, catalyzes the phosphorylation of D-glycero-alpha-D-manno-heptose 7-phosphate at the C-1 position to form D-glycero-alpha-D-manno-heptose 1,7-bisphosphate. The polypeptide is D-glycero-alpha-D-manno-heptose 7-phosphate kinase (Campylobacter jejuni subsp. jejuni serotype O:2 (strain ATCC 700819 / NCTC 11168)).